Here is a 354-residue protein sequence, read N- to C-terminus: Tyrosine recombinase XerH (354 aa).

Positions 48–134 (LTKGVKNIDE…AVINFFDFLD (87 aa)) constitute a Core-binding (CB) domain. Positions 163-346 (KLPEFMSKEE…DNDKLKLAAQ (184 aa)) constitute a Tyr recombinase domain. Active-site residues include Arg-205, Lys-231, His-298, Arg-301, and His-324. The active-site O-(3'-phospho-DNA)-tyrosine intermediate is the Tyr-333.

This sequence belongs to the 'phage' integrase family. XerH subfamily.

It is found in the cytoplasm. FtsK is required for efficient recombination. Site-specific tyrosine recombinase, which acts by catalyzing the cutting and rejoining of the recombining DNA molecules. Binds to the complete atypical dif motif (difH) site and to both halves separately. The protein is Tyrosine recombinase XerH of Campylobacter jejuni subsp. jejuni serotype O:2 (strain ATCC 700819 / NCTC 11168).